The sequence spans 205 residues: Basonuclin zinc finger protein homolog (205 aa).

2 consecutive C2H2-type zinc fingers follow at residues 107–130 (VACD…SAVH) and 135–164 (HTCT…PKLH). A disordered region spans residues 145–168 (QFSSRRSRNRHSSNNNPKLHMPES).

In terms of tissue distribution, expressed in the VA and VB motor neurons and at lower levels in the SABV neuron pair.

The protein localises to the nucleus. Its function is as follows. Probable transcription factor. Involved in motor neuron fate determination and maintenance, acting as a transcriptional repressor to counteract gene activation by transcription factor unc-3 in a subset of motor neurons. Required throughout development to repress transcription by unc-3, probably acting by binding to specific promoter elements. Represses expression of DA and DB motor neuron-specific effector genes, such as unc-129 and unc-53, in VA and VB motor neurons. This Caenorhabditis elegans protein is Basonuclin zinc finger protein homolog.